The primary structure comprises 154 residues: Putative hydrogenase maturation protease MJ0253 (154 aa).

The protein belongs to the peptidase A31 family.

The protein is Putative hydrogenase maturation protease MJ0253 of Methanocaldococcus jannaschii (strain ATCC 43067 / DSM 2661 / JAL-1 / JCM 10045 / NBRC 100440) (Methanococcus jannaschii).